A 73-amino-acid polypeptide reads, in one-letter code: MKIITRGEAMRIHQQHPTSRLFPFCTGKYRWHGSAEAYTGREVQDIPGVLAVFAERRKDSFGPYVRLMSVTLN.

The protein belongs to the YeeT/YkfH/YpjJ family.

This is an uncharacterized protein from Escherichia coli O157:H7.